The sequence spans 281 residues: Pantothenate synthetase (281 aa).

Residue 30–37 (MGNLHQGH) participates in ATP binding. His-37 serves as the catalytic Proton donor. Gln-61 provides a ligand contact to (R)-pantoate. Gln-61 serves as a coordination point for beta-alanine. 149–152 (GNKD) contacts ATP. Gln-155 is a (R)-pantoate binding site. ATP contacts are provided by residues Ile-178 and 186–189 (MSSR).

The protein belongs to the pantothenate synthetase family. Homodimer.

The protein localises to the cytoplasm. The catalysed reaction is (R)-pantoate + beta-alanine + ATP = (R)-pantothenate + AMP + diphosphate + H(+). Its pathway is cofactor biosynthesis; (R)-pantothenate biosynthesis; (R)-pantothenate from (R)-pantoate and beta-alanine: step 1/1. Functionally, catalyzes the condensation of pantoate with beta-alanine in an ATP-dependent reaction via a pantoyl-adenylate intermediate. This chain is Pantothenate synthetase, found in Shewanella baltica (strain OS155 / ATCC BAA-1091).